The primary structure comprises 242 residues: Glucosamine-6-phosphate deaminase (242 aa).

Asp-67 (proton acceptor; for enolization step) is an active-site residue. The For ring-opening step role is filled by Asn-137. Residue His-139 is the Proton acceptor; for ring-opening step of the active site. Residue Glu-144 is the For ring-opening step of the active site.

This sequence belongs to the glucosamine/galactosamine-6-phosphate isomerase family. NagB subfamily.

It catalyses the reaction alpha-D-glucosamine 6-phosphate + H2O = beta-D-fructose 6-phosphate + NH4(+). It participates in amino-sugar metabolism; N-acetylneuraminate degradation; D-fructose 6-phosphate from N-acetylneuraminate: step 5/5. In terms of biological role, catalyzes the reversible isomerization-deamination of glucosamine 6-phosphate (GlcN6P) to form fructose 6-phosphate (Fru6P) and ammonium ion. This chain is Glucosamine-6-phosphate deaminase, found in Staphylococcus haemolyticus (strain JCSC1435).